Consider the following 347-residue polypeptide: Quinolinate synthase (347 aa).

2 residues coordinate iminosuccinate: His-47 and Ser-68. Cys-113 provides a ligand contact to [4Fe-4S] cluster. Iminosuccinate is bound by residues 139 to 141 (YAN) and Ser-156. Cys-200 is a binding site for [4Fe-4S] cluster. Iminosuccinate contacts are provided by residues 226-228 (HPE) and Thr-243. Cys-297 contributes to the [4Fe-4S] cluster binding site.

This sequence belongs to the quinolinate synthase family. Type 1 subfamily. It depends on [4Fe-4S] cluster as a cofactor.

The protein resides in the cytoplasm. It carries out the reaction iminosuccinate + dihydroxyacetone phosphate = quinolinate + phosphate + 2 H2O + H(+). Its pathway is cofactor biosynthesis; NAD(+) biosynthesis; quinolinate from iminoaspartate: step 1/1. Catalyzes the condensation of iminoaspartate with dihydroxyacetone phosphate to form quinolinate. The chain is Quinolinate synthase from Salmonella choleraesuis (strain SC-B67).